The sequence spans 215 residues: Ribose-5-phosphate isomerase A (215 aa).

Residues 26–29 (TGST), 79–82 (DGAD), and 92–95 (KGGG) each bind substrate. The Proton acceptor role is filled by Glu101. Lys119 contacts substrate.

Belongs to the ribose 5-phosphate isomerase family. As to quaternary structure, homodimer.

The catalysed reaction is aldehydo-D-ribose 5-phosphate = D-ribulose 5-phosphate. It participates in carbohydrate degradation; pentose phosphate pathway; D-ribose 5-phosphate from D-ribulose 5-phosphate (non-oxidative stage): step 1/1. Its function is as follows. Catalyzes the reversible conversion of ribose-5-phosphate to ribulose 5-phosphate. The polypeptide is Ribose-5-phosphate isomerase A (Xanthomonas oryzae pv. oryzae (strain PXO99A)).